We begin with the raw amino-acid sequence, 205 residues long: UPF0301 protein Bind_0718 (205 aa).

It belongs to the UPF0301 (AlgH) family.

The polypeptide is UPF0301 protein Bind_0718 (Beijerinckia indica subsp. indica (strain ATCC 9039 / DSM 1715 / NCIMB 8712)).